The chain runs to 112 residues: ATP synthase epsilon chain (112 aa).

Belongs to the ATPase epsilon chain family. As to quaternary structure, F-type ATPases have 2 components, CF(1) - the catalytic core - and CF(0) - the membrane proton channel. CF(1) has five subunits: alpha(3), beta(3), gamma(1), delta(1), epsilon(1). CF(0) has three main subunits: a, b and c.

The protein resides in the cell inner membrane. In terms of biological role, produces ATP from ADP in the presence of a proton gradient across the membrane. The polypeptide is ATP synthase epsilon chain (Rickettsia rickettsii (strain Sheila Smith)).